A 420-amino-acid polypeptide reads, in one-letter code: Disease resistance protein CHS1 (420 aa).

The TIR domain maps to 12–167 (RELDVFLSFS…QIADDIRLMF (156 aa)). The active site involves glutamate 86. An NB-ARC domain is found at 185–406 (MKALYALLAL…KDIKEVWKIM (222 aa)).

As to expression, mostly expressed in leaves and flowers (mainly in sepals), and, at a lower intensity, in stems. Present at low levels in roots and seeds.

It is found in the cytoplasm. Its subcellular location is the nucleus. It catalyses the reaction NAD(+) + H2O = ADP-D-ribose + nicotinamide + H(+). Its function is as follows. Confers resistance to low temperatures by limiting chloroplast damage and cell death, thus maintaining growth homeostasis. Regulates steryl-esters and sterols accumulation. Limits leaf necrosis associated with virulent bacterial infection (e.g. Pseudomonas syringae pv. tomato DC3000). This is Disease resistance protein CHS1 from Arabidopsis thaliana (Mouse-ear cress).